The following is a 294-amino-acid chain: Cytidine deaminase (294 aa).

2 consecutive CMP/dCMP-type deaminase domains span residues 48–168 and 186–294; these read DEDA…FGPK and LTGN…VLLG. 89–91 lines the substrate pocket; sequence NME. Residue His102 participates in Zn(2+) binding. Residue Glu104 is the Proton donor of the active site. Zn(2+)-binding residues include Cys129 and Cys132.

The protein belongs to the cytidine and deoxycytidylate deaminase family. Homodimer. Requires Zn(2+) as cofactor.

It catalyses the reaction cytidine + H2O + H(+) = uridine + NH4(+). It carries out the reaction 2'-deoxycytidine + H2O + H(+) = 2'-deoxyuridine + NH4(+). Its function is as follows. This enzyme scavenges exogenous and endogenous cytidine and 2'-deoxycytidine for UMP synthesis. The sequence is that of Cytidine deaminase from Salmonella typhi.